We begin with the raw amino-acid sequence, 478 residues long: Chromosomal replication initiator protein DnaA (478 aa).

The interval 1 to 82 is domain I, interacts with DnaA modulators; sequence MHTMNKTAES…ELGKNAKLLY (82 aa). Residues 82 to 140 are domain II; the sequence is YKIKMENTYGNKLPFTEQLPSAHRSPVRTQEIDVPVQQKNPELRNPFIIPGIRNLKIES. The domain III, AAA+ region stretch occupies residues 141 to 358; sequence QLNANYSFDN…GAIISLIAQS (218 aa). 4 residues coordinate ATP: G186, G188, K189, and T190. The domain IV, binds dsDNA stretch occupies residues 359–478; that stretch reads SFNKKEVTLE…VDDINKKLSL (120 aa).

This sequence belongs to the DnaA family. As to quaternary structure, oligomerizes as a right-handed, spiral filament on DNA at oriC.

The protein resides in the cytoplasm. In terms of biological role, plays an essential role in the initiation and regulation of chromosomal replication. ATP-DnaA binds to the origin of replication (oriC) to initiate formation of the DNA replication initiation complex once per cell cycle. Binds the DnaA box (a 9 base pair repeat at the origin) and separates the double-stranded (ds)DNA. Forms a right-handed helical filament on oriC DNA; dsDNA binds to the exterior of the filament while single-stranded (ss)DNA is stabiized in the filament's interior. The ATP-DnaA-oriC complex binds and stabilizes one strand of the AT-rich DNA unwinding element (DUE), permitting loading of DNA polymerase. After initiation quickly degrades to an ADP-DnaA complex that is not apt for DNA replication. Binds acidic phospholipids. This Flavobacterium psychrophilum (strain ATCC 49511 / DSM 21280 / CIP 103535 / JIP02/86) protein is Chromosomal replication initiator protein DnaA.